Reading from the N-terminus, the 244-residue chain is Gasdermin-like protein rcd-1-2 (244 aa).

Residues 1-22 form a disordered region; that stretch reads MDNEEWFPLKQTHYPPPTIPSM.

The protein belongs to the gasdermin family. Heterooligomer; the heterooligomer with rcd-1-1 forms a ring-shaped pore complex when inserted in the membrane.

It localises to the cytoplasm. The protein localises to the cell membrane. Gasdermin-like protein involved in heterokaryon incompatibility, a process that ensures that during spontaneous vegetative cell fusion, only compatible cells from the same colony survive (non-self-recognition). In N.crassa, the rcd-1 locus exists as 2 incompatible alleles, rcd-1-1 (AC Q7SBA0) and rcd-1-2 (this entry). During the allorecognition process, forms a heterooligomer with rcd-1-1, thereby forming a functional gasdermin-like complex that binds to membranes and forms pores, triggering cell death. Binds negatively charged phospholipids, such as cardiolipin and phosphatidylserine. Also binds to phosphoinositides, preferentially to phosphatidylinositol-3-phosphate (PtdIns-3-P), PtdIns-5-P and PtdIns-3,5-P2. The chain is Gasdermin-like protein rcd-1-2 from Neurospora crassa.